We begin with the raw amino-acid sequence, 102 residues long: Polymeric immunoglobulin receptor (102 aa).

Interacts (mainly via CDR1-like domain) with dimeric IgA. Interacts (mainly via CDR2-like domain) with pentameric IgM. Either free or part of the secretory IgA (sIgA) complex that consists of two, four or five IgA monomers, and two additional non-Ig polypeptides, namely the JCHAIN and the secretory component (the proteolytic product of PIGR). Free secretory component interacts with bacterial antigens toxA of C.difficile and eaeA of E.coli. Post-translationally, N-glycosylated. N-glycosylation is required for anchoring IgA molecules to mucus, but is not necessary for Ig binding.

The protein resides in the cell membrane. It is found in the secreted. In terms of biological role, mediates selective transcytosis of polymeric IgA and IgM across mucosal epithelial cells. Binds polymeric IgA and IgM at the basolateral surface of epithelial cells. The complex is then transported across the cell to be secreted at the apical surface. During this process, a cleavage occurs that separates the extracellular (known as the secretory component) from the transmembrane segment. Through its N-linked glycans ensures anchoring of secretory IgA (sIgA) molecules to mucus lining the epithelial surface to neutralize extracellular pathogens. On its own (free form) may act as a non-specific microbial scavenger to prevent pathogen interaction with epithelial cells. This is Polymeric immunoglobulin receptor (PIGR) from Sus scrofa (Pig).